We begin with the raw amino-acid sequence, 286 residues long: Flagellin FlaB2 (286 aa).

Belongs to the bacterial flagellin family. In terms of assembly, the flagellum consists of an outer layer composed of repeating units of FlaA around a core that contains several antigenically related polypeptides. Interacts with FliW; a synthetic peptide of FlaB1 (residues 229-247) partially blocks binding of this protein to FliW.

It is found in the periplasmic flagellum. Its subcellular location is the periplasm. Component of the core of the flagella. This chain is Flagellin FlaB2, found in Treponema pallidum (strain Nichols).